Reading from the N-terminus, the 125-residue chain is UPF0538 protein C2C4.04c (125 aa).

It belongs to the UPF0538 family.

The chain is UPF0538 protein C2C4.04c from Schizosaccharomyces pombe (strain 972 / ATCC 24843) (Fission yeast).